The sequence spans 1086 residues: Fused isobutyryl-CoA mutase (1086 aa).

In terms of domain architecture, B12-binding spans 10 to 140 (HVRFVTASSL…QGMINVMLEE (131 aa)). His23 provides a ligand contact to adenosylcob(III)alamin. The segment at 153–407 (LERLPSGDVQ…FVALVDTINK (255 aa)) is GTPase chaperone MeaI. 210–215 (GAGKSS) serves as a coordination point for GTP. Positions 214, 238, 239, and 252 each coordinate Mg(2+). Residue Arg255 coordinates GTP. Glu300 and Thr301 together coordinate Mg(2+). 347 to 350 (NKFE) provides a ligand contact to GTP. Residues 408–570 (KAGTNWKTSL…YKENVPGSFP (163 aa)) form a linker region. 7 residues coordinate substrate: Phe578, Arg613, Arg719, Tyr763, Ser812, Arg847, and Lys852. The GTP site is built by Glu964 and Asn1085.

It belongs to the IcmF family. As to quaternary structure, homodimer. It depends on adenosylcob(III)alamin as a cofactor. Mg(2+) is required as a cofactor.

It catalyses the reaction 2-methylpropanoyl-CoA = butanoyl-CoA. The catalysed reaction is 3-methylbutanoyl-CoA = 2,2-dimethylpropanoyl-CoA. The enzyme catalyses GTP + H2O = GDP + phosphate + H(+). Its function is as follows. Catalyzes the reversible interconversion of isobutyryl-CoA and n-butyryl-CoA, and to a lesser extent, of pivalyl-CoA and isovaleryl-CoA, using radical chemistry. Also exhibits GTPase activity, associated with its G-protein domain (MeaI) that functions as a chaperone that assists cofactor delivery and proper holo-enzyme assembly. Also displays ATPase activity. Is not able to convert 3-hydroxybutyryl-CoA to 2-hydroxyisobutyryl-CoA. Does not exhibit methylmalonyl-CoA mutase (MCM) activity. This chain is Fused isobutyryl-CoA mutase, found in Geobacillus kaustophilus (strain HTA426).